Reading from the N-terminus, the 122-residue chain is Large ribosomal subunit protein uL14 (122 aa).

It belongs to the universal ribosomal protein uL14 family. Part of the 50S ribosomal subunit. Forms a cluster with proteins L3 and L19. In the 70S ribosome, L14 and L19 interact and together make contacts with the 16S rRNA in bridges B5 and B8.

Its function is as follows. Binds to 23S rRNA. Forms part of two intersubunit bridges in the 70S ribosome. The protein is Large ribosomal subunit protein uL14 of Janthinobacterium sp. (strain Marseille) (Minibacterium massiliensis).